The sequence spans 141 residues: VLSAADKTNVKSAWDKLGGHGAEYGAEALGRMFLSFPTTKTYPFHFDLSHGSAQPQGHGKKVAEALATAAGHLDDLPGALSALSDLHAHKLRVDPVNFKLLSHCLLVTLAAHMPAEFTPAVHASLDKFLASVSTVLTSKYR.

A Globin domain is found at 1–141 (VLSAADKTNV…VSTVLTSKYR (141 aa)). At serine 3 the chain carries Phosphoserine. Residue lysine 7 is modified to N6-succinyllysine. Threonine 8 bears the Phosphothreonine mark. Lysine 11 carries the post-translational modification N6-succinyllysine. N6-acetyllysine; alternate is present on lysine 16. Lysine 16 bears the N6-succinyllysine; alternate mark. Tyrosine 24 carries the phosphotyrosine modification. A Phosphoserine modification is found at serine 35. Lysine 40 bears the N6-succinyllysine mark. The residue at position 49 (serine 49) is a Phosphoserine. Residue histidine 58 participates in O2 binding. A heme b-binding site is contributed by histidine 87. Serine 102 bears the Phosphoserine mark. Position 108 is a phosphothreonine (threonine 108). Phosphoserine is present on residues serine 124 and serine 131. Residues threonine 134 and threonine 137 each carry the phosphothreonine modification. Serine 138 is subject to Phosphoserine.

The protein belongs to the globin family. In terms of assembly, heterotetramer of two alpha chains and two beta chains. As to expression, red blood cells.

In terms of biological role, involved in oxygen transport from the lung to the various peripheral tissues. This chain is Hemoglobin subunit alpha, found in Tamiasciurus hudsonicus (American red squirrel).